Consider the following 755-residue polypeptide: Cartilage oligomeric matrix protein (755 aa).

A signal peptide spans 1 to 19; that stretch reads MGPTACVLVLALAILRATG. The interval 21-84 is COMP N-terminal; sequence GQIPLGGDLA…PARTPGLSVR (64 aa). Residues 85-124 enclose the EGF-like 1 domain; sequence PVPLCAPGSCFPGVVCSETATGARCGPCPPGYTGNGSHCT. Disulfide bonds link Cys89–Cys100, Cys94–Cys109, Cys112–Cys123, Cys129–Cys140, Cys134–Cys149, Cys152–Cys176, Cys182–Cys195, Cys189–Cys204, Cys207–Cys219, Cys227–Cys241, Cys235–Cys251, Cys253–Cys264, Cys280–Cys285, Cys290–Cys310, Cys326–Cys346, Cys349–Cys369, Cys385–Cys405, Cys408–Cys428, Cys446–Cys466, Cys482–Cys502, and Cys518–Cys739. The N-linked (GlcNAc...) asparagine glycan is linked to Asn119. In terms of domain architecture, EGF-like 2; calcium-binding spans 125 to 177; it reads DVNECNAHPCFPRVRCINTSPGFHCEACPPGFSGPTHEGVGLTFAKSNKQVCT. The EGF-like 3; calcium-binding domain maps to 178-220; it reads DINECETGQHNCVPNSVCVNTRGSFQCGPCQPGFVGDQTSGCQ. Residues 223-265 enclose the EGF-like 4 domain; sequence GQHFCPDGSPSPCHEKANCVLERDGSRSCVCAVGWAGNGLLCG. TSP type-3 repeat units lie at residues 266–298, 299–334, 335–357, 358–393, 394–416, 417–454, 455–490, and 491–526; these read RDTDLDGFPDEKLRCSERQCRKDNCVTVPNSGQ, EDVDRDGIGDACDPDADGDGVPNEQDNCPLVRNPDQ, RNSDSDKWGDACDNCRSKKNDDQ, KDTDLDGRGDACDDDIDGDRIRNVADNCPRVPNFDQ, SDSDGDGVGDACDNCPQKDNPDQ, RDVDHDFVGDACDSDQDQDGDGHQDSRDNCPTVPNSAQ, QDSDHDGKGDACDDDDDNDGVPDSRDNCRLVPNPGQ, and EDNDRDGVGDACQGDFDADKVIDKIDVCPENAEVTL. 2 disordered regions span residues 296–341 and 353–501; these read SGQE…DSDK and KNDD…VGDA. 2 stretches are compositionally biased toward basic and acidic residues: residues 332 to 341 and 353 to 368; these read PDQRNSDSDK and KNDDQKDTDLDGRGDA. Ser394 bears the Phosphoserine mark. 2 stretches are compositionally biased toward basic and acidic residues: residues 412–424 and 456–465; these read DNPDQRDVDHDFV and DSDHDGKGDA. The mediates cell survival and induction of the IAP family of survival proteins stretch occupies residues 525–755; the sequence is TLTDFRAFQT…DYESHRLQRV (231 aa). One can recognise a TSP C-terminal domain in the interval 530 to 744; that stretch reads RAFQTVVLDP…LRYRCNDTIP (215 aa). A glycan (N-linked (GlcNAc...) asparagine) is linked at Asn740.

The protein belongs to the thrombospondin family. Pentamer; disulfide-linked. Exists in a more compact conformation in the presence of calcium and shows a more extended conformation in the absence of calcium. Interacts with ITGB3, ITGA5 and FN1. Binding to FN1 requires the presence of divalent cations (Ca(2+), Mg(2+) or Mn(2+)). The greatest amount of binding is seen in the presence of Mn(2+). Interacts with MATN1, MATN3, MATN4 and ACAN. Binds heparin, heparan sulfate and chondroitin sulfate. EDTA dimishes significantly its binding to ACAN and abolishes its binding to MATN3, MATN4 and chondroitin sulfate. Interacts with collagen I, II and IX, and interaction with these collagens is dependent on the presence of zinc ions. Interacts with ADAMTS12. Interacts with ITGA7. Ca(2+) is required as a cofactor. Proteolytically cleaved by metalloproteases ADAMTS4 and ADAMTS1 with ADAMTS4 showing more potent activity. In terms of tissue distribution, expressed in cartilage, including nasal, knee epiphyseal and rib tissues. Abundantly expressed in chondrocyte and tendon extracellular matrix (at protein level).

It is found in the secreted. The protein resides in the extracellular space. The protein localises to the extracellular matrix. Plays a role in the structural integrity of cartilage via its interaction with other extracellular matrix proteins such as the collagens and fibronectin. Can mediate the interaction of chondrocytes with the cartilage extracellular matrix through interaction with cell surface integrin receptors. Could play a role in the pathogenesis of osteoarthritis. Potent suppressor of apoptosis in both primary chondrocytes and transformed cells. Suppresses apoptosis by blocking the activation of caspase-3 and by inducing the IAP family of survival proteins (BIRC3, BIRC2, BIRC5 and XIAP). Essential for maintaining a vascular smooth muscle cells (VSMCs) contractile/differentiated phenotype under physiological and pathological stimuli. Maintains this phenotype of VSMCs by interacting with ITGA7. The polypeptide is Cartilage oligomeric matrix protein (Mus musculus (Mouse)).